The primary structure comprises 162 residues: Peroxiredoxin-2B (162 aa).

The region spanning 4–162 is the Thioredoxin domain; that stretch reads IAVGDVVPDG…SSADDILKAL (159 aa). The active-site Cysteine sulfenic acid (-SOH) intermediate is Cys-51.

This sequence belongs to the peroxiredoxin family. Prx5 subfamily. As to quaternary structure, monomer. Expressed in all tissues but mostly in reproductive tissues such as buds, flowers, siliques and seeds.

Its subcellular location is the cytoplasm. It catalyses the reaction [glutaredoxin]-dithiol + a hydroperoxide = [glutaredoxin]-disulfide + an alcohol + H2O. Its function is as follows. Reduces hydrogen peroxide and alkyl hydroperoxides with reducing equivalents provided through the thioredoxin or glutaredoxin system. May be involved in intracellular redox signaling. Thiol-specific peroxidase that catalyzes the reduction of hydrogen peroxide and organic hydroperoxides to water and alcohols, respectively. Plays a role in cell protection against oxidative stress by detoxifying peroxides and as sensor of hydrogen peroxide-mediated signaling events. In Arabidopsis thaliana (Mouse-ear cress), this protein is Peroxiredoxin-2B (PRXIIB).